Reading from the N-terminus, the 280-residue chain is Ycf3-interacting protein 1, chloroplastic (280 aa).

The transit peptide at Met-1 to Val-62 directs the protein to the chloroplast. A disordered region spans residues Pro-75–Asp-103. Acidic residues predominate over residues Asp-91–Asp-103. The helical transmembrane segment at Ala-255–Phe-275 threads the bilayer.

It belongs to the Y3IP1/CEST family. Interacts with Ycf3. Expressed in cotyledons, rosette and cauline leaves, stems and sepals.

The protein resides in the plastid. It localises to the chloroplast thylakoid membrane. Its function is as follows. Nuclear genome-encoded factor that participates in photosystem I (PSI) biogenesis. Cooperates with the plastid genome-encoded protein PSI assembly Ycf3 in the assembly of stable PSI units in the thylakoid membrane. Involved in light-induced chloroplast development and growth. Involved in the plant response to abiotic and photooxidative stresses. May be involved in the suppression of photooxidative damage. The polypeptide is Ycf3-interacting protein 1, chloroplastic (Arabidopsis thaliana (Mouse-ear cress)).